The sequence spans 119 residues: Ribonuclease P protein component (119 aa).

This sequence belongs to the RnpA family. In terms of assembly, consists of a catalytic RNA component (M1 or rnpB) and a protein subunit.

It catalyses the reaction Endonucleolytic cleavage of RNA, removing 5'-extranucleotides from tRNA precursor.. In terms of biological role, RNaseP catalyzes the removal of the 5'-leader sequence from pre-tRNA to produce the mature 5'-terminus. It can also cleave other RNA substrates such as 4.5S RNA. The protein component plays an auxiliary but essential role in vivo by binding to the 5'-leader sequence and broadening the substrate specificity of the ribozyme. In Listeria innocua serovar 6a (strain ATCC BAA-680 / CLIP 11262), this protein is Ribonuclease P protein component.